The sequence spans 345 residues: D-alanine--D-alanine ligase (345 aa).

Positions 133–340 constitute an ATP-grasp domain; the sequence is KLYAKERGVK…IDYRYIHQIQ (208 aa). 162–211 lines the ATP pocket; that stretch reads PLIVKPLRLGSSIGVSIAKNRQELDYALDVAFEFDEAALLEPFMQGIKEY. Positions 284, 296, and 298 each coordinate Mg(2+).

This sequence belongs to the D-alanine--D-alanine ligase family. Requires Mg(2+) as cofactor. The cofactor is Mn(2+).

Its subcellular location is the cytoplasm. It carries out the reaction 2 D-alanine + ATP = D-alanyl-D-alanine + ADP + phosphate + H(+). It participates in cell wall biogenesis; peptidoglycan biosynthesis. Functionally, cell wall formation. This is D-alanine--D-alanine ligase from Wolinella succinogenes (strain ATCC 29543 / DSM 1740 / CCUG 13145 / JCM 31913 / LMG 7466 / NCTC 11488 / FDC 602W) (Vibrio succinogenes).